A 161-amino-acid chain; its full sequence is Protein-export protein SecB (161 aa).

Belongs to the SecB family. As to quaternary structure, homotetramer, a dimer of dimers. One homotetramer interacts with 1 SecA dimer.

Its subcellular location is the cytoplasm. In terms of biological role, one of the proteins required for the normal export of preproteins out of the cell cytoplasm. It is a molecular chaperone that binds to a subset of precursor proteins, maintaining them in a translocation-competent state. It also specifically binds to its receptor SecA. The protein is Protein-export protein SecB of Coxiella burnetii (strain Dugway 5J108-111).